The sequence spans 1377 residues: DNA-directed RNA polymerase subunit beta (1377 aa).

The protein belongs to the RNA polymerase beta chain family. In terms of assembly, the RNAP catalytic core consists of 2 alpha, 1 beta, 1 beta' and 1 omega subunit. When a sigma factor is associated with the core the holoenzyme is formed, which can initiate transcription.

It carries out the reaction RNA(n) + a ribonucleoside 5'-triphosphate = RNA(n+1) + diphosphate. In terms of biological role, DNA-dependent RNA polymerase catalyzes the transcription of DNA into RNA using the four ribonucleoside triphosphates as substrates. This Brucella suis biovar 1 (strain 1330) protein is DNA-directed RNA polymerase subunit beta.